We begin with the raw amino-acid sequence, 318 residues long: Thymidylate synthase (318 aa).

Residues Arg-25 and 180-181 (RR) each bind dUMP. Cys-200 functions as the Nucleophile in the catalytic mechanism. Residues 220-223 (RSGD), Asn-231, and 261-263 (HIY) contribute to the dUMP site. Asp-223 contributes to the (6R)-5,10-methylene-5,6,7,8-tetrahydrofolate binding site. Ala-317 serves as a coordination point for (6R)-5,10-methylene-5,6,7,8-tetrahydrofolate.

The protein belongs to the thymidylate synthase family. Bacterial-type ThyA subfamily. As to quaternary structure, homodimer.

The protein resides in the cytoplasm. The enzyme catalyses dUMP + (6R)-5,10-methylene-5,6,7,8-tetrahydrofolate = 7,8-dihydrofolate + dTMP. The protein operates within pyrimidine metabolism; dTTP biosynthesis. Functionally, catalyzes the reductive methylation of 2'-deoxyuridine-5'-monophosphate (dUMP) to 2'-deoxythymidine-5'-monophosphate (dTMP) while utilizing 5,10-methylenetetrahydrofolate (mTHF) as the methyl donor and reductant in the reaction, yielding dihydrofolate (DHF) as a by-product. This enzymatic reaction provides an intracellular de novo source of dTMP, an essential precursor for DNA biosynthesis. The protein is Thymidylate synthase of Lactobacillus gasseri (strain ATCC 33323 / DSM 20243 / BCRC 14619 / CIP 102991 / JCM 1131 / KCTC 3163 / NCIMB 11718 / NCTC 13722 / AM63).